Here is a 958-residue protein sequence, read N- to C-terminus: SLIT and NTRK-like protein 5 (958 aa).

The first 40 residues, 1–40 (MHTCCPPVTLEQDLHRKMHSWMLQTLAFAVTSLVLSCAET), serve as a signal peptide directing secretion. At 41 to 664 (IDYYGEICDN…GGGASSVPLS (624 aa)) the chain is on the extracellular side. 6 LRR repeats span residues 82 to 103 (PIYH…EFVN), 106 to 127 (GASI…AFHG), 130 to 151 (GLRR…TFLG), 154 to 175 (NLEY…AFGK), 178 to 199 (LLQV…LFRF), and 201 to 222 (PLTH…GLLQ). N103 is a glycosylation site (N-linked (GlcNAc...) asparagine). Residues 235 to 286 (NPWNCSCELISLKDWLDSISYSALVGDVVCETPFRLHGRDLDEVSKQELCPR) form the LRRCT 1 domain. The segment at 317 to 358 (ATSSSAVYKPPLKPPKGTRQPNKPRVRPTSRQPSKDLGYSNY) is disordered. In terms of domain architecture, LRRNT spans 365-407 (QTKSPVPLECPTACSCNLQISDLGLNVNCQERKIESIAELQPK). 6 LRR repeats span residues 410-431 (NPKK…DFLE), 434-455 (GLDL…AFGD), 458-479 (NLRR…LFYG), 482-503 (SLQY…TFDP), 506-527 (NLQL…VFSG), and 529-550 (TLLR…GVLD). The LRRCT 2 domain maps to 563-614 (NPWDCTCDIVGMKLWVEQLKVGVLVDEVICKAPKKFAETDMRSIKSELLCPD). N644 is a glycosylation site (N-linked (GlcNAc...) asparagine). Residues 665–685 (VLILSLLLVFIMSVFVAAGLF) traverse the membrane as a helical segment. Over 686–958 (VLVMKRRKKN…LEKQTTFSQF (273 aa)) the chain is Cytoplasmic. A disordered region spans residues 789-844 (NHHLQQQQQPPPPPQQPQQQPPPQLQLQPGEEERRESHHLRSPAYSVSTIEPREDL). The segment covering 797–812 (QPPPPPQQPQQQPPPQ) has biased composition (pro residues).

The protein belongs to the SLITRK family. Expressed predominantly in the cerebral cortex of the brain but also at low levels in the spinal cord and medulla.

It localises to the membrane. In terms of biological role, suppresses neurite outgrowth. This Homo sapiens (Human) protein is SLIT and NTRK-like protein 5 (SLITRK5).